The primary structure comprises 82 residues: Small ribosomal subunit protein bS16 (82 aa).

This sequence belongs to the bacterial ribosomal protein bS16 family.

The protein is Small ribosomal subunit protein bS16 of Enterobacter sp. (strain 638).